A 753-amino-acid polypeptide reads, in one-letter code: A-kinase anchor protein 200 (753 aa).

Disordered regions lie at residues 1–345 (MGKA…QIEA), 462–482 (VETRSSSPPPPLPKSPPPSRV), 531–604 (TEQE…IDPA), 620–641 (VEKETGSISSNVAESSSVSDEQ), and 658–684 (VEETTEQETSDQQVISEEAHSDNDKEN). A lipid anchor (N-myristoyl glycine) is attached at Gly-2. Basic and acidic residues-rich tracts occupy residues 8–38 (RSIDITTDPKKVGEGDEVAGKVEKIDVDQKT) and 59–77 (AVEKKETEEHSENDKDLTT). The segment covering 81 to 93 (AAVAEGGDAVAET) has biased composition (low complexity). Residues 119–148 (KSKSKKDKVKKKWSFRSISFGKKDKQKPAK) are F-actin binding. A compositionally biased stretch (basic residues) spans 120–132 (SKSKKDKVKKKWS). Phosphoserine is present on residues Ser-132, Ser-135, and Ser-137. The span at 139 to 151 (GKKDKQKPAKSEE) shows a compositional bias: basic and acidic residues. Residues 152–181 (ATSPTSGTTSPTTAEAEAAPAGDAAVAEPS) show a composition bias toward low complexity. Residues 216 to 227 (EQEKQANGETEK) are compositionally biased toward basic and acidic residues. The segment covering 246–262 (EPATVTATESNTTATEE) has biased composition (low complexity). The segment at 345 to 725 (ASSEVIETVT…AEQEGESNNK (381 aa)) is interaction with PKA-R2. Pro residues predominate over residues 468 to 480 (SPPPPLPKSPPPS). Residues 532 to 544 (EQEKQQEEAKVDS) are compositionally biased toward basic and acidic residues. Low complexity predominate over residues 545-561 (VPETIEESSSTVVVEEV). Positions 578-594 (DVQKPIEDQDTPDEKES) are enriched in basic and acidic residues. Positions 626-638 (SISSNVAESSSVS) are enriched in low complexity. Positions 674–684 (EEAHSDNDKEN) are enriched in basic and acidic residues.

In terms of assembly, homodimer. Interacts with Cam; interaction is calcium-dependent and is inhibited by PKC-mediated phosphorylation of Akap200. Interacts with N/Notch; the interaction stabilizes N/Notch protein levels by preventing Cbl-mediated ubiquitination and subsequent lysosomal degradation of N/Notch. Interacts with Pka-R2. Binds to F-actin; interaction is independent of myristoylation, but is inhibited by Akap200 phosphorylation and Cam binding. Isoform B: Does not bind to Pka-R2. Myristoylated; myristoylation promotes accumulation at the cell periphery. In terms of processing, phosphorylated; phosphorylation prevents binding to F-actin and Cam. As to expression, detected in the brain in both neurons and glia (including perineurial glia); specifically in the neuronal nuclei in the cortex and synaptic neuropil (at protein level). Detected in germline cells, somatic follicle cells and outer rim of the ring canals during oogenesis (at protein level). Isoform A: Detected in the adult (at protein level). Isoform B: Detected in the adult with higher levels in the head (at protein level).

Its subcellular location is the cytoplasm. The protein localises to the cytosol. It localises to the cell membrane. The protein resides in the cytoskeleton. Functionally, scaffolding protein involved in the regulation of PKA signaling and anchoring to the actin cytoskeleton integrating signals propagated by cAMP, diacylglycerol and calcium. Contributes to the maintenance and regulation of cytoskeletal structures in germline via PKA-mediated signaling. As part of ethanol response in the glia, mediates ethanol-induced structural remodeling of actin cytoskeleton and perineurial membrane topology by anchoring PKA to the membrane of perineurial glia. In specific tissues such as eye and thorax, promotes N/Notch protein stability by inhibiting Cbl-mediated ubiquitination and lysosomal degradation pathway of N/Notch in a PKA-independent way. In the circadian brain neurons evening cells (E-cells), might have a role in circadian pacemaker synchronization by playing a redundant role in signaling downstream of the G protein-couple receptor Pdfr. This is A-kinase anchor protein 200 from Drosophila melanogaster (Fruit fly).